The primary structure comprises 214 residues: Immunoglobulin lambda-like polypeptide 5 (214 aa).

The signal sequence occupies residues 1 to 35 (MRPKTGQVGCETPEELGPGPRQRWPLLLLGLAMVA). The tract at residues 98–109 (VFGTGTKVTVLG) is j region. The segment at 110–214 (QPKANPTVTL…EKTVAPTECS (105 aa)) is c region. One can recognise an Ig-like C1-type domain in the interval 115-209 (PTVTLFPPSS…EGSTVEKTVA (95 aa)). The cysteines at positions 136 and 195 are disulfide-linked.

As to expression, contrary to IGLL1, not expressed in pre-B-cells.

It localises to the secreted. The protein is Immunoglobulin lambda-like polypeptide 5 (IGLL5) of Homo sapiens (Human).